A 1492-amino-acid chain; its full sequence is Cystic fibrosis transmembrane conductance regulator (1492 aa).

Residues 1–78 lie on the Cytoplasmic side of the membrane; the sequence is MQRSPIEKAN…KLVNALRRCF (78 aa). A helical transmembrane segment spans residues 79–99; that stretch reads FWRFLFYGILLYFVEFTKAVQ. One can recognise an ABC transmembrane type-1 1 domain in the interval 82–366; that stretch reads FLFYGILLYF…SAIQTWYDSL (285 aa). At 100–123 the chain is on the extracellular side; sequence PLCLGRIIASYNAKNTYEREIAYY. Residues 124-147 form a helical membrane-spanning segment; it reads LALGLCLLFVVRTLFLHPAVFGLQ. Residues 148-196 are Cytoplasmic-facing; the sequence is HLGMQMRIALFSLIYKKILKMSSRVLDKIDTGQLVSLLSNNLNKFDEGV. The helical transmembrane segment at 197 to 217 threads the bilayer; it reads AVAHFVWIAPVQVVLLMGLIW. Residues 218 to 223 lie on the Extracellular side of the membrane; that stretch reads NELTEF. A helical membrane pass occupies residues 224–244; the sequence is VFCGLGFLIMLALFQAWLGKK. Over 245-299 the chain is Cytoplasmic; that stretch reads MMQYRDKRAGKINERLAITSEIIDNIQSVKVYCWEDAMEKIIDDIRQVELKLTRK. Residues 300–320 traverse the membrane as a helical segment; the sequence is VAYCRYFSSSAFFFSGFFVVF. The Extracellular portion of the chain corresponds to 321 to 340; the sequence is LSVVPYAFIHTIKLRRIFTT. A helical membrane pass occupies residues 341–359; it reads ISYNIVLRMTVTRQFPSAI. The Cytoplasmic segment spans residues 360 to 867; sequence QTWYDSLGAI…YLRYVTTNRN (508 aa). Residues W402, S435, 459-466, and Q494 each bind ATP; that span reads GSTGSGKS. The ABC transporter 1 domain maps to 424-647; sequence NGDDGLFFSN…KPDFSSQLLG (224 aa). Residues 655 to 840 form a disordered R region region; it reads SAERRNSILT…EEINEEDLKE (186 aa). A helical membrane pass occupies residues 868–888; sequence LVFVLILCLVIFLAEVAASLA. One can recognise an ABC transmembrane type-1 2 domain in the interval 868–1169; sequence LVFVLILCLV…AVNSSIDVDG (302 aa). Over 889–932 the chain is Extracellular; sequence GLWIISGLAINTGSQTNDTSTDLSHLSVFSKFITNGSHYYIFYI. N-linked (GlcNAc...) asparagine glycosylation is found at N905 and N923. A discontinuously helical membrane pass occupies residues 933–953; it reads YVGLADSFLALGVIRGLPLVH. Residues 954 to 1004 lie on the Cytoplasmic side of the membrane; that stretch reads TLVTVSKDLHKQMLHSVLQGPMTAFNKMKAGRILNRFIKDTAIIDDMLPLT. Residues 1005–1025 traverse the membrane as a helical segment; the sequence is VFDFVQLILIVVGAICVVSVL. The Extracellular segment spans residues 1026-1027; the sequence is QP. Residues 1028–1048 form a helical membrane-spanning segment; it reads YTLLAAIPVAVIFIMLRAYFL. Over 1049 to 1109 the chain is Cytoplasmic; that stretch reads RTSQQLKQLE…TANWFLYLST (61 aa). Residues 1110-1130 form a helical membrane-spanning segment; that stretch reads LRWFQMRIDIVFVLFFIAVTF. Residues 1131–1144 lie on the Extracellular side of the membrane; sequence IAIATHDVGEGQVG. A helical membrane pass occupies residues 1145 to 1165; sequence IILTLAMNITSTLQWAVNSSI. At 1166 to 1492 the chain is on the cytoplasmic side; that stretch reads DVDGLMRSVS…AEEDLQETRL (327 aa). Residues 1220-1453 form the ABC transporter 2 domain; sequence MMVNNLTAKY…ASLFKQVFGH (234 aa). Residues Y1229 and 1254–1261 contribute to the ATP site; that span reads GRTGAGKS. Positions 1465 to 1474 are enriched in basic residues; it reads RNSSKRKTRP. A disordered region spans residues 1465–1492; it reads RNSSKRKTRPKISALQEEAEEDLQETRL. Residues 1481–1492 are compositionally biased toward acidic residues; sequence EEAEEDLQETRL. The PDZ-binding motif lies at 1483–1485; the sequence is AEE.

This sequence belongs to the ABC transporter superfamily. ABCC family. CFTR transporter (TC 3.A.1.202) subfamily. As to quaternary structure, monomer; does not require oligomerization for channel activity. May form oligomers in the membrane. Post-translationally, phosphorylated; cAMP treatment promotes phosphorylation and activates the channel. Dephosphorylation decreases the ATPase activity (in vitro). Phosphorylation at PKA sites activates the channel. Phosphorylation at PKC sites enhances the response to phosphorylation by PKA. As to expression, expressed in the rectal gland (at protein level).

Its subcellular location is the apical cell membrane. The protein resides in the early endosome membrane. The protein localises to the cell membrane. It is found in the recycling endosome membrane. It localises to the endoplasmic reticulum membrane. It carries out the reaction ATP + H2O + closed Cl(-) channel = ADP + phosphate + open Cl(-) channel.. The catalysed reaction is chloride(in) = chloride(out). It catalyses the reaction hydrogencarbonate(in) = hydrogencarbonate(out). The enzyme catalyses ATP + H2O = ADP + phosphate + H(+). Epithelial ion channel that plays an important role in the regulation of epithelial ion and water transport and fluid homeostasis. Mediates the transport of chloride ions across the cell membrane. Possesses an intrinsic ATPase activity and utilizes ATP to gate its channel; the passive flow of anions through the channel is gated by cycles of ATP binding and hydrolysis by the ATP-binding domains. The ion channel is also permeable to HCO(3)(-); selectivity depends on the extracellular chloride concentration. Exerts its function also by modulating the activity of other ion channels and transporters. Contributes to the regulation of the pH and the ion content of the epithelial fluid layer. The polypeptide is Cystic fibrosis transmembrane conductance regulator (Squalus acanthias (Spiny dogfish)).